The primary structure comprises 197 residues: Sodium/potassium-transporting ATPase subunit beta-1-interacting protein 3 (197 aa).

The next 4 membrane-spanning stretches (helical) occupy residues 2-22 (GCCT…VSAL), 35-55 (APIL…FGTI), 62-82 (IMVY…IICF), and 152-172 (VQIL…SISM).

It belongs to the NKAIN family. Interacts with ATP1B1.

It is found in the cell membrane. This chain is Sodium/potassium-transporting ATPase subunit beta-1-interacting protein 3 (NKAIN3), found in Homo sapiens (Human).